We begin with the raw amino-acid sequence, 114 residues long: PDZK1-interacting protein 1 (114 aa).

At 1 to 28 (MSAFGLLILGLLTAVPPASCRQGLGNLQ) the chain is on the extracellular side. The chain crosses the membrane as a helical span at residues 29–51 (PWMQGLIAVAVFLVLVAIAFAVN). Residues 52–114 (HFWCQEEPEP…EEGKVRSTPM (63 aa)) lie on the Cytoplasmic side of the membrane. The residue at position 85 (S85) is a Phosphoserine. The disordered stretch occupies residues 95–114 (HENAYENVPEEEGKVRSTPM). Over residues 105–114 (EEGKVRSTPM) the composition is skewed to basic and acidic residues.

The protein belongs to the PDZK1-interacting protein 1/SMIM24 family. Forms a heterodimer (via N-terminal transmembrane helix) with SLC5A2/SGLT2 (via TM13); this interaction enhances SLC5A2 transporter activity. Interacts with PDZK1.

The protein localises to the apical cell membrane. In terms of biological role, auxiliary protein of electrogenic Na(+)-coupled sugar symporter SLC5A2/SGLT2 and SLC5A1/SGLT1. Essential for the transporter activity of SLC5A2/SGLT2 but not SLC5A1/SGLT1. The protein is PDZK1-interacting protein 1 of Pongo abelii (Sumatran orangutan).